The following is a 276-amino-acid chain: GPN-loop GTPase 3 (276 aa).

13–18 contributes to the GTP binding site; the sequence is SSGKST. Residues 70–72 carry the Gly-Pro-Asn (GPN)-loop; involved in dimer interface motif; that stretch reads GPN. 173 to 176 is a GTP binding site; it reads SKMD. Residues 257–276 are disordered; it reads EDQEPKDPDRFEADDLEDDE. Residues 259–269 show a composition bias toward basic and acidic residues; the sequence is QEPKDPDRFEA.

It belongs to the GPN-loop GTPase family. In terms of assembly, heterodimers with gpn1 or gpn2. Binds to RNA polymerase II (RNAPII).

It is found in the cytoplasm. The protein resides in the nucleus. Functionally, small GTPase required for proper nuclear import of RNA polymerase II and III (RNAPII and RNAPIII). May act at an RNAP assembly step prior to nuclear import. This Schizosaccharomyces pombe (strain 972 / ATCC 24843) (Fission yeast) protein is GPN-loop GTPase 3.